The primary structure comprises 41 residues: Photosystem II reaction center protein Y (41 aa).

A helical membrane pass occupies residues Ile7–Ile25.

This sequence belongs to the PsbY family. PSII is composed of 1 copy each of membrane proteins PsbA, PsbB, PsbC, PsbD, PsbE, PsbF, PsbH, PsbI, PsbJ, PsbK, PsbL, PsbM, PsbT, PsbX, PsbY, PsbZ, Psb30/Ycf12, peripheral proteins PsbO, CyanoQ (PsbQ), PsbU, PsbV and a large number of cofactors. It forms dimeric complexes.

The protein resides in the cellular thylakoid membrane. In terms of biological role, loosely associated component of the core of photosystem II (PSII), it is not always seen in crystals. PSII is a light-driven water plastoquinone oxidoreductase, using light energy to abstract electrons from H(2)O, generating a proton gradient subsequently used for ATP formation. This is Photosystem II reaction center protein Y from Nostoc punctiforme (strain ATCC 29133 / PCC 73102).